The primary structure comprises 347 residues: UDP-3-O-acylglucosamine N-acyltransferase (347 aa).

Histidine 241 acts as the Proton acceptor in catalysis.

It belongs to the transferase hexapeptide repeat family. LpxD subfamily. Homotrimer.

It carries out the reaction a UDP-3-O-[(3R)-3-hydroxyacyl]-alpha-D-glucosamine + a (3R)-hydroxyacyl-[ACP] = a UDP-2-N,3-O-bis[(3R)-3-hydroxyacyl]-alpha-D-glucosamine + holo-[ACP] + H(+). Its pathway is bacterial outer membrane biogenesis; LPS lipid A biosynthesis. In terms of biological role, catalyzes the N-acylation of UDP-3-O-acylglucosamine using 3-hydroxyacyl-ACP as the acyl donor. Is involved in the biosynthesis of lipid A, a phosphorylated glycolipid that anchors the lipopolysaccharide to the outer membrane of the cell. This is UDP-3-O-acylglucosamine N-acyltransferase from Neisseria gonorrhoeae (strain ATCC 700825 / FA 1090).